A 284-amino-acid chain; its full sequence is T-cell leukemia homeobox protein 2 (284 aa).

Disordered stretches follow at residues 1–50 (MEPG…NGAF), 78–106 (GGVI…GPSG), and 139–166 (FSGT…SFSR). Residues 30-50 (TPGGGLGLGRGGQGHGENGAF) show a composition bias toward gly residues. Residues 87–96 (RPLPVPPPAG) show a composition bias toward pro residues. Positions 157 to 216 (RKKPRTSFSRSQVLELERRFLRQKYLASAERAALAKALRMTDAQVKTWFQNRRTKWRRQT) form a DNA-binding region, homeobox.

It is found in the nucleus. Functionally, transcription activator that binds DNA elements with the consensus sequence 5'-CGGTAATTGG-3'. Binds DNA via its homeobox. Required for normal cell death of enteric neurons in the gastrointestinal tract. Required for normal development of the enteric nervous system, and for proper development of normal motility of the gastrointestinal tract. The protein is T-cell leukemia homeobox protein 2 (TLX2) of Homo sapiens (Human).